Here is a 122-residue protein sequence, read N- to C-terminus: Small ribosomal subunit protein uS13 (122 aa).

Positions 94–122 (SLPVRGQRTKTNARTRKVHVSRSKNSRGK) are disordered.

It belongs to the universal ribosomal protein uS13 family. Part of the 30S ribosomal subunit. Forms a loose heterodimer with protein S19. Forms two bridges to the 50S subunit in the 70S ribosome.

Its function is as follows. Located at the top of the head of the 30S subunit, it contacts several helices of the 16S rRNA. In the 70S ribosome it contacts the 23S rRNA (bridge B1a) and protein L5 of the 50S subunit (bridge B1b), connecting the 2 subunits; these bridges are implicated in subunit movement. Contacts the tRNAs in the A and P-sites. The sequence is that of Small ribosomal subunit protein uS13 from Haemophilus influenzae (strain ATCC 51907 / DSM 11121 / KW20 / Rd).